A 453-amino-acid polypeptide reads, in one-letter code: Allantoinase (453 aa).

Histidine 59, histidine 61, lysine 146, histidine 186, histidine 242, and aspartate 315 together coordinate Zn(2+). The residue at position 146 (lysine 146) is an N6-carboxylysine.

Belongs to the metallo-dependent hydrolases superfamily. Allantoinase family. In terms of assembly, homotetramer. Zn(2+) is required as a cofactor. In terms of processing, carboxylation allows a single lysine to coordinate two zinc ions.

The catalysed reaction is (S)-allantoin + H2O = allantoate + H(+). It participates in nitrogen metabolism; (S)-allantoin degradation; allantoate from (S)-allantoin: step 1/1. Catalyzes the conversion of allantoin (5-ureidohydantoin) to allantoic acid by hydrolytic cleavage of the five-member hydantoin ring. The sequence is that of Allantoinase from Escherichia coli O9:H4 (strain HS).